The chain runs to 685 residues: Kinesin-related protein 11 (685 aa).

The Kinesin motor domain occupies 4 to 405 (NISVSVRARP…LKFASRAKKI (402 aa)). Residues 36-105 (TSLPPPITQP…TTVPASPAPT (70 aa)) form a disordered region. A compositionally biased stretch (low complexity) spans 47–105 (SSLPPISTPIKSSSSSSTSTSAGSLKTPLKTPLKTPLKTPLKTNSTTTNTTVPASPAPT). 156–163 (GITSSGKT) contacts ATP. Residues 411–488 (VNEILDDKAL…KINNLNKLIL (78 aa)) are a coiled coil. Residues 495–568 (NSASKGGSGS…QSTSSLTIGG (74 aa)) are disordered. The span at 511–520 (RSTFVSPSQN) shows a compositional bias: polar residues. Positions 533-565 (PNSFSNLLLQSPSQNNNNNSHISPLSQSTSSLT) are enriched in low complexity. Residues 574 to 683 (FESNELIQIQ…LKSKIQEYEV (110 aa)) adopt a coiled-coil conformation.

It belongs to the TRAFAC class myosin-kinesin ATPase superfamily. Kinesin family.

The protein resides in the cytoplasm. Its subcellular location is the cytoskeleton. Functionally, microtubule-associated force-producing protein that plays a role in organelle transport. Its motor activity is directed toward the microtubule's plus end. The chain is Kinesin-related protein 11 (kif11) from Dictyostelium discoideum (Social amoeba).